The chain runs to 529 residues: Bifunctional purine biosynthesis protein PurH (529 aa).

The region spanning 1 to 148 is the MGS-like domain; sequence MQQRRPVRRA…KNHKDVAIVV (148 aa). Residue lysine 287 is modified to N6-acetyllysine.

It belongs to the PurH family.

It catalyses the reaction (6R)-10-formyltetrahydrofolate + 5-amino-1-(5-phospho-beta-D-ribosyl)imidazole-4-carboxamide = 5-formamido-1-(5-phospho-D-ribosyl)imidazole-4-carboxamide + (6S)-5,6,7,8-tetrahydrofolate. The enzyme catalyses IMP + H2O = 5-formamido-1-(5-phospho-D-ribosyl)imidazole-4-carboxamide. Its pathway is purine metabolism; IMP biosynthesis via de novo pathway; 5-formamido-1-(5-phospho-D-ribosyl)imidazole-4-carboxamide from 5-amino-1-(5-phospho-D-ribosyl)imidazole-4-carboxamide (10-formyl THF route): step 1/1. The protein operates within purine metabolism; IMP biosynthesis via de novo pathway; IMP from 5-formamido-1-(5-phospho-D-ribosyl)imidazole-4-carboxamide: step 1/1. This chain is Bifunctional purine biosynthesis protein PurH, found in Escherichia coli O45:K1 (strain S88 / ExPEC).